Reading from the N-terminus, the 264-residue chain is S-adenosylmethionine decarboxylase proenzyme (264 aa).

Catalysis depends on Ser112, which acts as the Schiff-base intermediate with substrate; via pyruvic acid. Position 112 is a pyruvic acid (Ser); by autocatalysis (Ser112). The Proton acceptor; for processing activity role is filled by His117. Cys140 functions as the Proton donor; for catalytic activity in the catalytic mechanism.

Belongs to the prokaryotic AdoMetDC family. Type 2 subfamily. As to quaternary structure, heterooctamer of four alpha and four beta chains arranged as a tetramer of alpha/beta heterodimers. Pyruvate serves as cofactor. Is synthesized initially as an inactive proenzyme. Formation of the active enzyme involves a self-maturation process in which the active site pyruvoyl group is generated from an internal serine residue via an autocatalytic post-translational modification. Two non-identical subunits are generated from the proenzyme in this reaction, and the pyruvate is formed at the N-terminus of the alpha chain, which is derived from the carboxyl end of the proenzyme. The post-translation cleavage follows an unusual pathway, termed non-hydrolytic serinolysis, in which the side chain hydroxyl group of the serine supplies its oxygen atom to form the C-terminus of the beta chain, while the remainder of the serine residue undergoes an oxidative deamination to produce ammonia and the pyruvoyl group blocking the N-terminus of the alpha chain.

The catalysed reaction is S-adenosyl-L-methionine + H(+) = S-adenosyl 3-(methylsulfanyl)propylamine + CO2. Its pathway is amine and polyamine biosynthesis; S-adenosylmethioninamine biosynthesis; S-adenosylmethioninamine from S-adenosyl-L-methionine: step 1/1. Its function is as follows. Catalyzes the decarboxylation of S-adenosylmethionine to S-adenosylmethioninamine (dcAdoMet), the propylamine donor required for the synthesis of the polyamines spermine and spermidine from the diamine putrescine. This chain is S-adenosylmethionine decarboxylase proenzyme, found in Escherichia coli O127:H6 (strain E2348/69 / EPEC).